The following is a 100-amino-acid chain: Insertion element IS600 uncharacterized 11 kDa protein (100 aa).

This sequence belongs to the transposase 8 family.

This is Insertion element IS600 uncharacterized 11 kDa protein from Shigella sonnei.